The chain runs to 932 residues: GPI ethanolamine phosphate transferase 1 (932 aa).

Topologically, residues 1–8 (MISLNKKL) are cytoplasmic. Residues 9–29 (VLLVGVIFHVAFMWSIFDIYF) traverse the membrane as a helical segment. The Lumenal segment spans residues 30-456 (VSPLIHGMKH…TYNWLFLRTL (427 aa)). Residues Asn138, Asn202, and Asn360 are each glycosylated (N-linked (GlcNAc...) asparagine). Residues 457 to 477 (VTIGFFGWIAVAFCSYLLAFV) traverse the membrane as a helical segment. The Cytoplasmic portion of the chain corresponds to 478 to 486 (VQSDKPFTT). Residues 487 to 507 (SLPLKGVAYVALAILSGFFVF) traverse the membrane as a helical segment. The Lumenal portion of the chain corresponds to 508 to 509 (QK). Residues 510–530 (SPLHYHLYAVFPVVFWEAVLQ) traverse the membrane as a helical segment. The Cytoplasmic portion of the chain corresponds to 531–551 (RRTAVAEGISILARRSTSKAP). The helical transmembrane segment at 552-572 (ALAAILDIGLSLVLLEAIVYG) threads the bilayer. The Lumenal portion of the chain corresponds to 573-577 (YFHRE). The helical transmembrane segment at 578–598 (IFSVCFGLATLWPFVHNFTVA) threads the bilayer. The Cytoplasmic segment spans residues 599 to 603 (KREWP). Residues 604 to 624 (TTLAWVVMCAIMSSFTLLEVV) form a helical membrane-spanning segment. The Lumenal portion of the chain corresponds to 625-627 (KVE). Residues 628-648 (SIEQILLSGALMLVIGLVFTI) traverse the membrane as a helical segment. Residues 649 to 653 (HLQRK) are Cytoplasmic-facing. The chain crosses the membrane as a helical span at residues 654–674 (LALAASTVCVLFAQILLVVAT). At 675-696 (MYFTRESVESLTARNGLPLFSQ) the chain is on the lumenal side. Residues 697 to 717 (VGGWISLLLSLAVPFLHFLGS) traverse the membrane as a helical segment. At 718–737 (DAKDYRLRLLIIFLAFGPTF) the chain is on the cytoplasmic side. Residues 738–758 (VILTISWEGFFYVCFFAILVI) form a helical membrane-spanning segment. Topologically, residues 759 to 786 (WIELETQMRDARVTPQTRADLTPGDFRM) are lumenal. A helical transmembrane segment spans residues 787–807 (ALFTFFMSQIGFFGIGNIASI). The Cytoplasmic segment spans residues 808-828 (SSFSLDSVYRLIPVFDPFSMG). A helical membrane pass occupies residues 829–849 (ALLMFKILVPFAVLSACLGIL). The Lumenal portion of the chain corresponds to 850–859 (NLKLGVPPSA). Residues 860-880 (LFSMVLCVSDILTLNFFYLVV) form a helical membrane-spanning segment. Residues 881 to 900 (DEGSWLDIGTGISHYCIASG) are Cytoplasmic-facing. The helical transmembrane segment at 901 to 921 (LSLFMMVLEYLSGVLVAGVTI) threads the bilayer. Over 922-932 (APHVSKIKKDM) the chain is Lumenal.

It belongs to the PIGG/PIGN/PIGO family. PIGN subfamily.

It is found in the endoplasmic reticulum membrane. Its pathway is glycolipid biosynthesis; glycosylphosphatidylinositol-anchor biosynthesis. Ethanolamine phosphate transferase involved in glycosylphosphatidylinositol-anchor biosynthesis. Transfers ethanolamine phosphate to the first alpha-1,4-linked mannose of the glycosylphosphatidylinositol precursor of GPI-anchor. This chain is GPI ethanolamine phosphate transferase 1 (MCD4), found in Yarrowia lipolytica (strain CLIB 122 / E 150) (Yeast).